The sequence spans 535 residues: Light-independent protochlorophyllide reductase subunit B (535 aa).

Aspartate 36 is a binding site for [4Fe-4S] cluster. Residue aspartate 292 is the Proton donor of the active site. Glycine 428–leucine 429 contacts substrate.

This sequence belongs to the ChlB/BchB/BchZ family. Protochlorophyllide reductase is composed of three subunits; BchL, BchN and BchB. Forms a heterotetramer of two BchB and two BchN subunits. Requires [4Fe-4S] cluster as cofactor.

It carries out the reaction chlorophyllide a + oxidized 2[4Fe-4S]-[ferredoxin] + 2 ADP + 2 phosphate = protochlorophyllide a + reduced 2[4Fe-4S]-[ferredoxin] + 2 ATP + 2 H2O. It functions in the pathway porphyrin-containing compound metabolism; bacteriochlorophyll biosynthesis (light-independent). In terms of biological role, component of the dark-operative protochlorophyllide reductase (DPOR) that uses Mg-ATP and reduced ferredoxin to reduce ring D of protochlorophyllide (Pchlide) to form chlorophyllide a (Chlide). This reaction is light-independent. The NB-protein (BchN-BchB) is the catalytic component of the complex. This Pelodictyon phaeoclathratiforme (strain DSM 5477 / BU-1) protein is Light-independent protochlorophyllide reductase subunit B.